Consider the following 628-residue polypeptide: Probable potassium transport system protein Kup 1 (628 aa).

Helical transmembrane passes span 18–38 (ITLA…LYAL), 58–78 (IVSL…VLLV), 106–126 (ALLM…AVIT), 141–161 (ITPE…VILF), 175–195 (FGPI…YEIV), 219–239 (IAFI…ALYA), 253–273 (WGSL…ALLL), 285–305 (LLAP…ATVI), 343–363 (IYLP…IIWF), 371–391 (AAYG…LMVV), 401–421 (WLIA…FAAN), and 425–445 (FLAG…VMTT).

It belongs to the HAK/KUP transporter (TC 2.A.72) family.

The protein resides in the cell inner membrane. The enzyme catalyses K(+)(in) + H(+)(in) = K(+)(out) + H(+)(out). Functionally, transport of potassium into the cell. Likely operates as a K(+):H(+) symporter. This chain is Probable potassium transport system protein Kup 1, found in Aeromonas hydrophila subsp. hydrophila (strain ATCC 7966 / DSM 30187 / BCRC 13018 / CCUG 14551 / JCM 1027 / KCTC 2358 / NCIMB 9240 / NCTC 8049).